A 243-amino-acid chain; its full sequence is 1-(5-phosphoribosyl)-5-[(5-phosphoribosylamino)methylideneamino] imidazole-4-carboxamide isomerase (243 aa).

Aspartate 8 functions as the Proton acceptor in the catalytic mechanism. Aspartate 130 acts as the Proton donor in catalysis.

It belongs to the HisA/HisF family.

It localises to the cytoplasm. The catalysed reaction is 1-(5-phospho-beta-D-ribosyl)-5-[(5-phospho-beta-D-ribosylamino)methylideneamino]imidazole-4-carboxamide = 5-[(5-phospho-1-deoxy-D-ribulos-1-ylimino)methylamino]-1-(5-phospho-beta-D-ribosyl)imidazole-4-carboxamide. The protein operates within amino-acid biosynthesis; L-histidine biosynthesis; L-histidine from 5-phospho-alpha-D-ribose 1-diphosphate: step 4/9. In Saccharophagus degradans (strain 2-40 / ATCC 43961 / DSM 17024), this protein is 1-(5-phosphoribosyl)-5-[(5-phosphoribosylamino)methylideneamino] imidazole-4-carboxamide isomerase.